The following is a 464-amino-acid chain: 3-isopropylmalate dehydratase large subunit (464 aa).

3 residues coordinate [4Fe-4S] cluster: cysteine 345, cysteine 405, and cysteine 408.

Belongs to the aconitase/IPM isomerase family. LeuC type 1 subfamily. In terms of assembly, heterodimer of LeuC and LeuD. The cofactor is [4Fe-4S] cluster.

It carries out the reaction (2R,3S)-3-isopropylmalate = (2S)-2-isopropylmalate. The protein operates within amino-acid biosynthesis; L-leucine biosynthesis; L-leucine from 3-methyl-2-oxobutanoate: step 2/4. Catalyzes the isomerization between 2-isopropylmalate and 3-isopropylmalate, via the formation of 2-isopropylmaleate. The sequence is that of 3-isopropylmalate dehydratase large subunit from Bacteroides thetaiotaomicron (strain ATCC 29148 / DSM 2079 / JCM 5827 / CCUG 10774 / NCTC 10582 / VPI-5482 / E50).